A 271-amino-acid polypeptide reads, in one-letter code: Type III pantothenate kinase (271 aa).

6-13 (DVRNTNIV) contacts ATP. A substrate-binding site is contributed by 109 to 112 (GADR). The active-site Proton acceptor is the Asp-111. K(+) is bound at residue Asp-131. ATP is bound at residue Thr-134. Thr-186 contacts substrate.

It belongs to the type III pantothenate kinase family. As to quaternary structure, homodimer. NH4(+) is required as a cofactor. It depends on K(+) as a cofactor.

It localises to the cytoplasm. The enzyme catalyses (R)-pantothenate + ATP = (R)-4'-phosphopantothenate + ADP + H(+). The protein operates within cofactor biosynthesis; coenzyme A biosynthesis; CoA from (R)-pantothenate: step 1/5. Catalyzes the phosphorylation of pantothenate (Pan), the first step in CoA biosynthesis. The protein is Type III pantothenate kinase of Rhodococcus erythropolis (strain PR4 / NBRC 100887).